The primary structure comprises 244 residues: Phosphoadenosine 5'-phosphosulfate reductase (244 aa).

Catalysis depends on Cys-239, which acts as the Nucleophile; cysteine thiosulfonate intermediate.

This sequence belongs to the PAPS reductase family. CysH subfamily.

Its subcellular location is the cytoplasm. It carries out the reaction [thioredoxin]-disulfide + sulfite + adenosine 3',5'-bisphosphate + 2 H(+) = [thioredoxin]-dithiol + 3'-phosphoadenylyl sulfate. Its pathway is sulfur metabolism; hydrogen sulfide biosynthesis; sulfite from sulfate: step 3/3. Functionally, catalyzes the formation of sulfite from phosphoadenosine 5'-phosphosulfate (PAPS) using thioredoxin as an electron donor. The polypeptide is Phosphoadenosine 5'-phosphosulfate reductase (Serratia proteamaculans (strain 568)).